The primary structure comprises 259 residues: tRNA pseudouridine synthase A (259 aa).

The active-site Nucleophile is Asp-51. Residue Tyr-109 coordinates substrate.

This sequence belongs to the tRNA pseudouridine synthase TruA family. As to quaternary structure, homodimer.

It carries out the reaction uridine(38/39/40) in tRNA = pseudouridine(38/39/40) in tRNA. Functionally, formation of pseudouridine at positions 38, 39 and 40 in the anticodon stem and loop of transfer RNAs. In Nitrosococcus oceani (strain ATCC 19707 / BCRC 17464 / JCM 30415 / NCIMB 11848 / C-107), this protein is tRNA pseudouridine synthase A.